The chain runs to 265 residues: Type III pantothenate kinase (265 aa).

6-13 (DVGNTNIV) is an ATP binding site. Residues Y100 and 107-110 (GADR) contribute to the substrate site. D109 functions as the Proton acceptor in the catalytic mechanism. D129 contributes to the K(+) binding site. T132 is an ATP binding site. T184 provides a ligand contact to substrate.

Belongs to the type III pantothenate kinase family. As to quaternary structure, homodimer. Requires NH4(+) as cofactor. It depends on K(+) as a cofactor.

The protein localises to the cytoplasm. The catalysed reaction is (R)-pantothenate + ATP = (R)-4'-phosphopantothenate + ADP + H(+). It participates in cofactor biosynthesis; coenzyme A biosynthesis; CoA from (R)-pantothenate: step 1/5. Catalyzes the phosphorylation of pantothenate (Pan), the first step in CoA biosynthesis. This Alkaliphilus oremlandii (strain OhILAs) (Clostridium oremlandii (strain OhILAs)) protein is Type III pantothenate kinase.